A 532-amino-acid polypeptide reads, in one-letter code: Neutral amino acid transporter A (532 aa).

At Met1 the chain carries N-acetylmethionine. Residues Met1–Met29 are disordered. Residues Met1 to Arg41 lie on the Cytoplasmic side of the membrane. 3 helical membrane-spanning segments follow: residues His42 to Leu62, Met88 to Ser108, and Ala119 to Ile139. Residues Lys140–Thr216 are Extracellular-facing. Asn201 and Asn206 each carry an N-linked (GlcNAc...) asparagine glycan. A run of 6 helical transmembrane segments spans residues Asp217 to Leu237, Ala257 to Ile277, Ile298 to Phe318, Phe328 to Thr348, Ile373 to Ile393, and Val418 to Ile438. Residues Glu495 to Leu532 form a disordered region. Ser507, Ser527, and Ser530 each carry phosphoserine.

This sequence belongs to the dicarboxylate/amino acid:cation symporter (DAACS) (TC 2.A.23) family. SLC1A4 subfamily.

It is found in the membrane. The protein localises to the melanosome. It carries out the reaction L-threonine(in) + Na(+)(in) = L-threonine(out) + Na(+)(out). The catalysed reaction is L-serine(in) + Na(+)(in) = L-serine(out) + Na(+)(out). It catalyses the reaction L-cysteine(in) + Na(+)(in) = L-cysteine(out) + Na(+)(out). The enzyme catalyses L-alanine(in) + Na(+)(in) = L-alanine(out) + Na(+)(out). It carries out the reaction L-proline(in) + Na(+)(in) = L-proline(out) + Na(+)(out). The catalysed reaction is 4-hydroxy-L-proline(in) + Na(+)(in) = 4-hydroxy-L-proline(out) + Na(+)(out). Sodium-dependent neutral amino-acid transporter that mediates transport of alanine, serine, cysteine, proline, hydroxyproline and threonine. The protein is Neutral amino acid transporter A (Slc1a4) of Mus musculus (Mouse).